A 534-amino-acid chain; its full sequence is Lysophosphatidylcholine acyltransferase 1 (534 aa).

Residues 1 to 25 (MRLRGRGPRAAPSSSSGAGDARRLA) are disordered. Residues 1–57 (MRLRGRGPRAAPSSSSGAGDARRLAPPGRNPFVHELRLSALQKAQVAFMTLTLFPIR) lie on the Cytoplasmic side of the membrane. Positions 8-19 (PRAAPSSSSGAG) are enriched in low complexity. Residues 58–78 (LLFAAFMMLLAWPFALVASLG) traverse the membrane as a helical; Signal-anchor for type II membrane protein segment. Residues 79–534 (PPDKEPEQPL…GRKNSCKKVD (456 aa)) lie on the Lumenal side of the membrane. The HXXXXD motif motif lies at 135-140 (HSSYFD). EF-hand domains lie at 379-414 (PVSD…VCRP) and 451-486 (ISEL…YPDF). Residues Asp392, Ser394, Glu398, and Glu403 each coordinate Ca(2+). A Di-lysine motif motif is present at residues 531-534 (KKVD).

It belongs to the 1-acyl-sn-glycerol-3-phosphate acyltransferase family. As to expression, enriched in alveolar type II cells of lung. Also highly expressed in stomach.

The protein localises to the endoplasmic reticulum membrane. It localises to the golgi apparatus membrane. It is found in the cell membrane. Its subcellular location is the lipid droplet. The catalysed reaction is a 1-acyl-sn-glycero-3-phosphocholine + an acyl-CoA = a 1,2-diacyl-sn-glycero-3-phosphocholine + CoA. The enzyme catalyses a 1-O-alkyl-sn-glycero-3-phosphocholine + acetyl-CoA = a 1-O-alkyl-2-acetyl-sn-glycero-3-phosphocholine + CoA. It catalyses the reaction a 1-acyl-sn-glycero-3-phosphate + an acyl-CoA = a 1,2-diacyl-sn-glycero-3-phosphate + CoA. It carries out the reaction a 1-O-(1Z-alkenyl)-sn-glycero-3-phosphocholine + an acyl-CoA = a 1-O-(1Z-alkenyl)-2-acyl-sn-glycero-3-phosphocholine + CoA. The catalysed reaction is 1-acyl-sn-glycero-3-phospho-(1'-sn-glycerol) + an acyl-CoA = a 1,2-diacyl-sn-glycero-3-phospho-(1'-sn-glycerol) + CoA. The enzyme catalyses a 1-acyl-sn-glycero-3-phosphocholine + hexadecanoyl-CoA = 1-acyl-2-hexadecanoyl-sn-glycero-3-phosphocholine + CoA. It catalyses the reaction a 1-acyl-sn-glycero-3-phosphate + hexadecanoyl-CoA = 1-acyl-2-hexadecanoyl-sn-glycero-3-phosphate + CoA. It carries out the reaction 1-acyl-sn-glycero-3-phospho-(1'-sn-glycerol) + hexadecanoyl-CoA = 1-acyl-2-hexadecanoyl-sn-glycero-3-phospho-(1'-sn-glycerol) + CoA. The catalysed reaction is 1-hexadecanoyl-sn-glycero-3-phosphocholine + hexadecanoyl-CoA = 1,2-dihexadecanoyl-sn-glycero-3-phosphocholine + CoA. The enzyme catalyses 1-O-hexadecyl-sn-glycero-3-phosphocholine + hexadecanoyl-CoA = 1-O-hexadecyl-2-hexadecanoyl-sn-glycero-3-phosphocholine + CoA. It catalyses the reaction a 1-O-(1Z-alkenyl)-sn-glycero-3-phosphocholine + hexadecanoyl-CoA = 1-O-(1Z)-alkenyl-2-hexadecanoyl-sn-glycero-3-phosphocholine + CoA. It carries out the reaction 1-hexadecanoyl-sn-glycero-3-phospho-(1'-sn-glycerol) + hexadecanoyl-CoA = 1,2-dihexadecanoyl-sn-glycero-3-phospho-(1'-sn-glycerol) + CoA. The catalysed reaction is 1-dodecanoyl-sn-glycero-3-phosphocholine + hexadecanoyl-CoA = 1-dodecanoyl-2-hexadecanoyl-sn-glycero-3-phosphocholine + CoA. The enzyme catalyses 1-tetradecanoyl-sn-glycero-3-phosphocholine + hexadecanoyl-CoA = 1-tetradecanoyl-2-hexadecanoyl-sn-glycero-3-phosphocholine + CoA. It catalyses the reaction 1-O-octadecyl-sn-glycero-3-phosphocholine + hexadecanoyl-CoA = 1-O-octadecyl-2-hexadecanoyl-sn-glycero-3-phosphocholine + CoA. It carries out the reaction 1-octadecanoyl-sn-glycero-3-phosphocholine + hexadecanoyl-CoA = 1-octadecanoyl-2-hexadecanoyl-sn-glycero-3-phosphocholine + CoA. The catalysed reaction is 1-(9Z-octadecenoyl)-sn-glycero-3-phosphocholine + hexadecanoyl-CoA = 1-(9Z-octadecenoyl)-2-hexadecanoyl-sn-glycero-3-phosphocholine + CoA. The enzyme catalyses 1-eicosanoyl-sn-glycero-3-phosphocholine + hexadecanoyl-CoA = 1-eicosanoyl-2-hexadecanoyl-sn-glycero-3-phosphocholine + CoA. It catalyses the reaction hexanoyl-CoA + 1-hexadecanoyl-sn-glycero-3-phosphocholine = 1-hexadecanoyl-2-hexanoyl-sn-glycero-3-phosphocholine + CoA. It carries out the reaction octanoyl-CoA + 1-hexadecanoyl-sn-glycero-3-phosphocholine = 1-hexadecanoyl-2-octanoyl-sn-glycero-3-phosphocholine + CoA. The catalysed reaction is decanoyl-CoA + 1-hexadecanoyl-sn-glycero-3-phosphocholine = 1-hexadecanoyl-2-decanoyl-sn-glycero-3-phosphocholine + CoA. The enzyme catalyses dodecanoyl-CoA + 1-hexadecanoyl-sn-glycero-3-phosphocholine = 1-hexadecanoyl-2-dodecanoyl-sn-glycero-3-phosphocholine + CoA. It catalyses the reaction tetradecanoyl-CoA + 1-hexadecanoyl-sn-glycero-3-phosphocholine = 1-hexadecanoyl-2-tetradecanoyl-sn-glycero-3-phosphocholine + CoA. It carries out the reaction 1-hexadecanoyl-sn-glycero-3-phosphocholine + (9Z)-octadecenoyl-CoA = 1-hexadecanoyl-2-(9Z-octadecenoyl)-sn-glycero-3-phosphocholine + CoA. The catalysed reaction is (9Z,12Z)-octadecadienoyl-CoA + 1-hexadecanoyl-sn-glycero-3-phosphocholine = 1-hexadecanoyl-2-(9Z,12Z-octadecadienoyl)-sn-glycero-3-phosphocholine + CoA. The enzyme catalyses (4Z,7Z,10Z,13Z,16Z,19Z)-docosahexaenoyl-CoA + 1-hexadecanoyl-sn-glycero-3-phosphocholine = 1-hexadecanoyl-2-(4Z,7Z,10Z,13Z,16Z,19Z-docosahexaenoyl)-sn-glycero-3-phosphocholine + CoA. It catalyses the reaction 1-hexadecanoyl-sn-glycero-3-phosphocholine + acetyl-CoA = 1-hexadecanoyl-2-acetyl-sn-glycero-3-phosphocholine + CoA. It carries out the reaction eicosanoyl-CoA + 1-hexadecanoyl-sn-glycero-3-phosphocholine = 1-hexadecanoyl-2-eicosanoyl-sn-glycero-3-phosphocholine + CoA. The catalysed reaction is 1-O-hexadecyl-sn-glycero-3-phosphocholine + acetyl-CoA = 1-O-hexadecyl-2-acetyl-sn-glycero-3-phosphocholine + CoA. The protein operates within lipid metabolism; phospholipid metabolism. Activity is stimulated by Mg(2+) or Mn(2+). Its function is as follows. Exhibits acyltransferase activity. Exhibits acetyltransferase activity. Activity is calcium-independent. Catalyzes the conversion of lysophosphatidylcholine (1-acyl-sn-glycero-3-phosphocholine or LPC) into phosphatidylcholine (1,2-diacyl-sn-glycero-3-phosphocholine or PC). Catalyzes the conversion 1-acyl-sn-glycerol-3-phosphate (lysophosphatidic acid or LPA) into 1,2-diacyl-sn-glycerol-3-phosphate (phosphatidic acid or PA) by incorporating an acyl moiety at the sn-2 position of the glycerol backbone. Displays a clear preference for saturated fatty acyl-CoAs, and 1-myristoyl or 1-palmitoyl LPC as acyl donors and acceptors, respectively. Involved in platelet-activating factor (PAF) biosynthesis by catalyzing the conversion of the PAF precursor, 1-O-alkyl-sn-glycero-3-phosphocholine (lyso-PAF) into 1-O-alkyl-2-acetyl-sn-glycero-3-phosphocholine (PAF). May synthesize phosphatidylcholine in pulmonary surfactant, thereby playing a pivotal role in respiratory physiology. Involved in the regulation of lipid droplet number and size. The protein is Lysophosphatidylcholine acyltransferase 1 (Lpcat1) of Rattus norvegicus (Rat).